We begin with the raw amino-acid sequence, 133 residues long: Large ribosomal subunit protein bL17 (133 aa).

It belongs to the bacterial ribosomal protein bL17 family. As to quaternary structure, part of the 50S ribosomal subunit. Contacts protein L32.

The chain is Large ribosomal subunit protein bL17 from Polaromonas naphthalenivorans (strain CJ2).